The sequence spans 199 residues: Interleukin-11 (199 aa).

A signal peptide spans 1-21 (MNCVCRLVLVVLSLWPDRVVA). The tract at residues 182–190 (HLTLDWAVR) is important for interaction with IL11RA and for the stimulation of cell proliferation.

Belongs to the IL-6 superfamily. As to quaternary structure, interacts with IL11RA to associate with IL6ST, giving rise to a multimeric signaling complex.

Its subcellular location is the secreted. Functionally, cytokine that stimulates the proliferation of hematopoietic stem cells and megakaryocyte progenitor cells and induces megakaryocyte maturation resulting in increased platelet production. Also promotes the proliferation of hepatocytes in response to liver damage. Binding to its receptor formed by IL6ST and IL11RA activates a signaling cascade that promotes cell proliferation. Signaling leads to the activation of intracellular protein kinases and the phosphorylation of STAT3. The interaction with the membrane-bound IL11RA and IL6ST stimulates 'classic signaling', whereas the binding of IL11 and soluble IL11RA to IL6ST stimulates 'trans-signaling'. In Rattus norvegicus (Rat), this protein is Interleukin-11.